Consider the following 122-residue polypeptide: Large ribosomal subunit protein uL18 (122 aa).

The protein belongs to the universal ribosomal protein uL18 family. Part of the 50S ribosomal subunit; part of the 5S rRNA/L5/L18/L25 subcomplex. Contacts the 5S and 23S rRNAs.

In terms of biological role, this is one of the proteins that bind and probably mediate the attachment of the 5S RNA into the large ribosomal subunit, where it forms part of the central protuberance. This Leptospira biflexa serovar Patoc (strain Patoc 1 / Ames) protein is Large ribosomal subunit protein uL18.